A 341-amino-acid polypeptide reads, in one-letter code: DNA-directed RNA polymerase subunit alpha (341 aa).

An alpha N-terminal domain (alpha-NTD) region spans residues 1 to 233 (MIRDEIPISA…NLFIPFLHAE (233 aa)). Residues 265–341 (TKGVTFKHIF…NLPKNKLHFH (77 aa)) form an alpha C-terminal domain (alpha-CTD) region.

This sequence belongs to the RNA polymerase alpha chain family. In plastids the minimal PEP RNA polymerase catalytic core is composed of four subunits: alpha, beta, beta', and beta''. When a (nuclear-encoded) sigma factor is associated with the core the holoenzyme is formed, which can initiate transcription.

It localises to the plastid. The protein localises to the chloroplast. It carries out the reaction RNA(n) + a ribonucleoside 5'-triphosphate = RNA(n+1) + diphosphate. Functionally, DNA-dependent RNA polymerase catalyzes the transcription of DNA into RNA using the four ribonucleoside triphosphates as substrates. In Takakia lepidozioides (Moss), this protein is DNA-directed RNA polymerase subunit alpha.